The sequence spans 536 residues: Probable monofunctional riboflavin biosynthesis protein RIBA 3, chloroplastic (536 aa).

A chloroplast-targeting transit peptide spans 1-43 (MDRVLLSSQLSSQTVVNTRVQQGSGGINSIGFAVIRKGSLKLR). The segment at 44–310 (CYAIGGLGGG…IADLIRYRRK (267 aa)) is inactive DHBP synthase. Residues 133–134 (GD), Asp-138, and 248–252 (RAGHT) each bind D-ribulose 5-phosphate. A GTP cyclohydrolase II region spans residues 311–536 (REKLVELIAV…GDQDEDDTHN (226 aa)). Residue 361–365 (RVHSE) coordinates GTP. 3 residues coordinate Zn(2+): Cys-366, Cys-377, and Cys-379. Residues Gln-382, 405-407 (EGR), and Thr-427 each bind GTP. Asp-439 functions as the Proton acceptor; for GTP cyclohydrolase activity in the catalytic mechanism. The active-site Nucleophile; for GTP cyclohydrolase activity is Arg-441. 2 residues coordinate GTP: Thr-462 and Lys-467. The disordered stretch occupies residues 507 to 536 (YGSDLPGNVPEEFLNPDDIAGDQDEDDTHN). The segment covering 525–536 (IAGDQDEDDTHN) has biased composition (acidic residues).

The protein in the N-terminal section; belongs to the DHBP synthase family. It in the C-terminal section; belongs to the GTP cyclohydrolase II family. The cofactor is Zn(2+).

Its subcellular location is the plastid. The protein resides in the chloroplast. The enzyme catalyses GTP + 4 H2O = 2,5-diamino-6-hydroxy-4-(5-phosphoribosylamino)-pyrimidine + formate + 2 phosphate + 3 H(+). Its pathway is cofactor biosynthesis; riboflavin biosynthesis; 5-amino-6-(D-ribitylamino)uracil from GTP: step 1/4. In terms of biological role, involved in riboflavin biosynthesis. Catalyzes the conversion of GTP to 2,5-diamino-6-ribosylamino-4(3H)-pyrimidinone 5'-phosphate (DARP), formate and pyrophosphate. In Oryza sativa subsp. japonica (Rice), this protein is Probable monofunctional riboflavin biosynthesis protein RIBA 3, chloroplastic (RIBA3).